The following is a 231-amino-acid chain: Urease accessory protein UreE (231 aa).

Residues 185–231 (VASPLDEPHGSGLHIHGIHSHGEGHSHGDHDHDHSHSHGDHDHDHKH) form a disordered region. Residues 204–231 (SHGEGHSHGDHDHDHSHSHGDHDHDHKH) show a composition bias toward basic and acidic residues.

Belongs to the UreE family.

It localises to the cytoplasm. In terms of biological role, involved in urease metallocenter assembly. Binds nickel. Probably functions as a nickel donor during metallocenter assembly. This Yersinia pseudotuberculosis serotype O:1b (strain IP 31758) protein is Urease accessory protein UreE.